Consider the following 296-residue polypeptide: Cytidine deaminase (296 aa).

CMP/dCMP-type deaminase domains lie at 47–167 (DSHE…FGPA) and 186–296 (ESDD…VDPV). 88–90 (NLE) lines the substrate pocket. H101 lines the Zn(2+) pocket. E103 (proton donor) is an active-site residue. Zn(2+)-binding residues include C128 and C131.

It belongs to the cytidine and deoxycytidylate deaminase family. Homodimer. Requires Zn(2+) as cofactor.

It carries out the reaction cytidine + H2O + H(+) = uridine + NH4(+). The catalysed reaction is 2'-deoxycytidine + H2O + H(+) = 2'-deoxyuridine + NH4(+). Its function is as follows. This enzyme scavenges exogenous and endogenous cytidine and 2'-deoxycytidine for UMP synthesis. The chain is Cytidine deaminase from Shewanella amazonensis (strain ATCC BAA-1098 / SB2B).